A 564-amino-acid polypeptide reads, in one-letter code: 3beta-hydroxysteroid-dehydrogenase/decarboxylase isoform 2 (564 aa).

Residue 16–21 (GGRGFA) participates in NAD(+) binding. N-linked (GlcNAc...) asparagine glycosylation is found at Asn146 and Asn158. The NAD(+) site is built by Tyr161 and Lys165. Catalysis depends on Lys165, which acts as the Proton donor. The 181-residue stretch at 384 to 564 (VADTLLWKDL…EKLFGSKKHD (181 aa)) folds into the Reticulon domain. Helical transmembrane passes span 398-418 (IAIFILISIYYNFVATGSTVV) and 424-444 (ALLVASVFLFLHGILPEKIFG). Asn474 is a glycosylation site (N-linked (GlcNAc...) asparagine). A run of 2 helical transmembrane segments spans residues 486–506 (GNDWSFFFKVVFVLLALSLAG) and 507–527 (AISLHSIFVIGLPIAFLAFLV).

It belongs to the 3-beta-HSD family.

The protein localises to the endoplasmic reticulum membrane. The catalysed reaction is a 3beta-hydroxysteroid-4alpha-carboxylate + NAD(+) = a 3-oxosteroid + CO2 + NADH. It catalyses the reaction 4alpha-carboxy-4beta,14alpha-dimethyl-9beta,19-cyclo-5alpha-ergost-24(24(1))-en-3beta-ol + NAD(+) = cycloeucalenone + CO2 + NADH. It functions in the pathway steroid biosynthesis; zymosterol biosynthesis; zymosterol from lanosterol: step 4/6. 3beta-hydroxysteroid-dehydrogenase/decarboxylase involved in sterol synthesis. Catalyzes the formation of 3-oxosteroids from 3beta-hydroxysteroids-4alpha-carboxylate. Involved in the regulation of inflorescence internodes and leaves growth, probably by affecting auxin transporter activity possibly by altering sterol composition in the membranes. This chain is 3beta-hydroxysteroid-dehydrogenase/decarboxylase isoform 2, found in Arabidopsis thaliana (Mouse-ear cress).